The primary structure comprises 456 residues: 1,3-beta-glucanosyltransferase gas4 (456 aa).

The first 25 residues, 1–25, serve as a signal peptide directing secretion; sequence MGVANIIYALFLLGPSIFLKATAQT. A disulfide bridge links Cys-68 with Cys-97. Residues Tyr-86, Asn-156, Glu-157, Asp-197, and Arg-202 each coordinate (1,3-beta-D-glucosyl)n. The Proton donor role is filled by Glu-157. 2 cysteine pairs are disulfide-bonded: Cys-211–Cys-350 and Cys-229–Cys-260. An N-linked (GlcNAc...) asparagine glycan is attached at Asn-248. Glu-257 functions as the Nucleophile in the catalytic mechanism. Residue Tyr-296 participates in (1,3-beta-D-glucosyl)n binding. Disordered regions lie at residues 334 to 353 and 384 to 434; these read NPKGDGGYKKAGSPSKCPAN and IEGP…ESGS. 2 N-linked (GlcNAc...) asparagine glycosylation sites follow: Asn-353 and Asn-415. Residues 417–434 are compositionally biased toward low complexity; that stretch reads TSTTSYTSGMTSSSESGS. Ser-432 carries GPI-anchor amidated serine lipidation. The propeptide at 433 to 456 is removed in mature form; sequence GSSKIGVAFCQALFITVLIATLSF.

Belongs to the glycosyl hydrolase 72 family.

Its subcellular location is the cell membrane. Splits internally a 1,3-beta-glucan molecule and transfers the newly generated reducing end (the donor) to the non-reducing end of another 1,3-beta-glucan molecule (the acceptor) forming a 1,3-beta linkage, resulting in the elongation of 1,3-beta-glucan chains in the cell wall. Involved in spore wall assembly. This is 1,3-beta-glucanosyltransferase gas4 (gas4) from Schizosaccharomyces pombe (strain 972 / ATCC 24843) (Fission yeast).